Reading from the N-terminus, the 205-residue chain is Protein GrpE (205 aa).

The protein belongs to the GrpE family. Homodimer.

Its subcellular location is the cytoplasm. Functionally, participates actively in the response to hyperosmotic and heat shock by preventing the aggregation of stress-denatured proteins, in association with DnaK and GrpE. It is the nucleotide exchange factor for DnaK and may function as a thermosensor. Unfolded proteins bind initially to DnaJ; upon interaction with the DnaJ-bound protein, DnaK hydrolyzes its bound ATP, resulting in the formation of a stable complex. GrpE releases ADP from DnaK; ATP binding to DnaK triggers the release of the substrate protein, thus completing the reaction cycle. Several rounds of ATP-dependent interactions between DnaJ, DnaK and GrpE are required for fully efficient folding. The polypeptide is Protein GrpE (Shewanella loihica (strain ATCC BAA-1088 / PV-4)).